The chain runs to 637 residues: MATAPASHAFRTEVRKMLHIITHSLYTNREIFLRELVSNASDALDKLRFIRSRGDAVVAPDLAPGIDISVDKEARILTIADTGVGMTRQELMDNLGTIARSGSEQFVADLAAAENAKDADAASIIGRFGVGFYAVFMVADRVEVTSRSYIEGEAAHTWTSDGLGEFTVEEATGDIPQRGTVIKAHLREDAAEFLEKYRIEGILRKHSQFISFPIRVDGEQVNTTPALWREPKFSITDEQYADFYKHLTFDTEAPLRTLHVSVDAPVQFTGLVFVPPHGQEVFSMGRDRWGLDLYVRRVLIQRENKDLLPEYLGFLKGIVDTEDLPLNISRETLQENVVVRKIGQTLTKQVLADLARLAADDAEAYATFWRQHGKVFKLGYSDYANREKFAPLLRFNSSHHDDAQGLTSLDDYISRAREGQKEIWYIAAPGREAARLDPRVEVFRRKGLEVLYLLEPIDEFVLETLDSYSDFSFKAVEHADGEKLAQFEDTGPARDVTPLTEDEDAAFARLIERMKALLGDAVEDVRISHRLADSPACLVQPGGASTSSMDRLLRVLHKDESVPRKVFEVNRDHPILRNLLKVFTSDASDPLVEDTTRQLFATSLMLDGYLKDPHELAAMMHRLMEKSGDWYKAVRGL.

Residues 1–330 (MATAPASHAF…TEDLPLNISR (330 aa)) are a; substrate-binding. A b region spans residues 331 to 551 (ETLQENVVVR…GGASTSSMDR (221 aa)). A c region spans residues 552–637 (LLRVLHKDES…GDWYKAVRGL (86 aa)).

It belongs to the heat shock protein 90 family. As to quaternary structure, homodimer.

It is found in the cytoplasm. Its function is as follows. Molecular chaperone. Has ATPase activity. The polypeptide is Chaperone protein HtpG (Nitratidesulfovibrio vulgaris (strain ATCC 29579 / DSM 644 / CCUG 34227 / NCIMB 8303 / VKM B-1760 / Hildenborough) (Desulfovibrio vulgaris)).